The chain runs to 302 residues: Succinate--CoA ligase [ADP-forming] subunit alpha (302 aa).

CoA-binding positions include 17 to 20 (TGST), Lys-43, and 96 to 98 (ITE). Substrate is bound at residue Tyr-159. Residue His-247 is the Tele-phosphohistidine intermediate of the active site.

It belongs to the succinate/malate CoA ligase alpha subunit family. In terms of assembly, heterotetramer of two alpha and two beta subunits.

The catalysed reaction is succinate + ATP + CoA = succinyl-CoA + ADP + phosphate. It carries out the reaction GTP + succinate + CoA = succinyl-CoA + GDP + phosphate. Its pathway is carbohydrate metabolism; tricarboxylic acid cycle; succinate from succinyl-CoA (ligase route): step 1/1. In terms of biological role, succinyl-CoA synthetase functions in the citric acid cycle (TCA), coupling the hydrolysis of succinyl-CoA to the synthesis of either ATP or GTP and thus represents the only step of substrate-level phosphorylation in the TCA. The alpha subunit of the enzyme binds the substrates coenzyme A and phosphate, while succinate binding and nucleotide specificity is provided by the beta subunit. The polypeptide is Succinate--CoA ligase [ADP-forming] subunit alpha (Staphylococcus aureus (strain MRSA252)).